The primary structure comprises 327 residues: Zinc transport protein ZntB (327 aa).

The Cytoplasmic segment spans residues 1–271 (MESFAGKELQ…AMNRRTYTMS (271 aa)). The chain crosses the membrane as a helical span at residues 272-292 (LLAMVFLPTTFLTGLFGVNLG). At 293–300 (GIPGGDAP) the chain is on the periplasmic side. The helical transmembrane segment at 301-321 (FGFFTFCLMLVILVGGVAWWL) threads the bilayer. The Cytoplasmic segment spans residues 322-327 (KRSKWL).

It belongs to the CorA metal ion transporter (MIT) (TC 1.A.35) family.

It is found in the cell inner membrane. It carries out the reaction Zn(2+)(out) + H(+)(out) = Zn(2+)(in) + H(+)(in). Its function is as follows. Zinc transporter. Acts as a Zn(2+):proton symporter, which likely mediates zinc ion uptake. This Pectobacterium carotovorum subsp. carotovorum (strain PC1) protein is Zinc transport protein ZntB.